A 426-amino-acid chain; its full sequence is MASAIFVLNLKGKVIISRDYRADIPMSVVEKFLPLKSEVEEEQGFSTPCLTHEGINYIYIHHNDVYLLALSKMNSDAMEMLVFLRKMADVFIDYFKELQEESIRDNFVLVYELLDEIMDFGFPQTTETKILQEYITQTSNTVKKHAPPPIAMTNAISWRSEGIHYRKNEVFLDVIESVNLIAAADGTVIQSEILGKVRLKCYLSGMPELRLGLNDKVLFEAAGRTIKGNTVEMEDVKFHQCVRLARFENDRTISFIPPDGEFDLMSYRMSSNVRPLIWVECESIVHSGSRIEFMVKAKAQFKKRCIANNVQIIIPVPEDADSPRFQTSNGHVQYAPEQAAMVWNIKKFAGGKEFFMRAEMGLPSVKNEDIQVQKKRPVQLKFAIPYFTTSGIQVRYLKITEPKLNYHAMPWVRYVTQNGTEYSIRQ.

The 259-residue stretch at 167–425 (KNEVFLDVIE…TQNGTEYSIR (259 aa)) folds into the MHD domain.

This sequence belongs to the adaptor complexes medium subunit family. Adaptor protein complex 1 (AP-1) is a heterotetramer composed of two large adaptins (gamma-type subunit apl4 and beta-type subunit apl2), a medium adaptin (mu-type subunit apm1) and a small adaptin (sigma-type subunit aps1). AP-1 interacts with clathrin. Interacts with sad1.

Its subcellular location is the cytoplasmic vesicle. It is found in the clathrin-coated vesicle membrane. The protein localises to the membrane. The protein resides in the clathrin-coated pit. Component of the adaptor complexes which link clathrin to receptors in coated vesicles. Clathrin-associated protein complexes are believed to interact with the cytoplasmic tails of membrane proteins, leading to their selection and concentration. The protein is AP-1 complex subunit mu-1 (apm1) of Schizosaccharomyces pombe (strain 972 / ATCC 24843) (Fission yeast).